We begin with the raw amino-acid sequence, 287 residues long: 4,4'-diapophytoene synthase (287 aa).

Residues 18–21, Y41, and R45 each bind (2E,6E)-farnesyl diphosphate; that span reads HSKS. Mg(2+) is bound by residues D48 and D52. Q165 serves as a coordination point for (2E,6E)-farnesyl diphosphate. N168 is a binding site for Mg(2+). (2E,6E)-farnesyl diphosphate is bound at residue R171. D172 is a binding site for Mg(2+). Y248 is a (2E,6E)-farnesyl diphosphate binding site.

Belongs to the phytoene/squalene synthase family. CrtM subfamily. Requires Mg(2+) as cofactor.

It carries out the reaction 2 (2E,6E)-farnesyl diphosphate = 15-cis-4,4'-diapophytoene + 2 diphosphate. It functions in the pathway carotenoid biosynthesis; staphyloxanthin biosynthesis; staphyloxanthin from farnesyl diphosphate: step 1/5. Its function is as follows. Involved in the biosynthesis of the yellow-orange carotenoid staphyloxanthin, which plays a role in the virulence via its protective function against oxidative stress. Catalyzes the head-to-head condensation of two molecules of farnesyl diphosphate (FPP) into the colorless C(30) carotenoid 4,4'-diapophytoene (dehydrosqualene). The chain is 4,4'-diapophytoene synthase from Staphylococcus aureus.